Here is a 108-residue protein sequence, read N- to C-terminus: MSTVYETLYILRPDLTDEQVELAIAKYQNLLQEQGATDIEVQNRGKRRLAYEIKKQRDGFYVQFNYNAPGKAIAILERAMRLSEEVIRYLTVKQEVTKEKEDKVAVTA.

It belongs to the bacterial ribosomal protein bS6 family.

Functionally, binds together with bS18 to 16S ribosomal RNA. The chain is Small ribosomal subunit protein bS6 from Trichormus variabilis (strain ATCC 29413 / PCC 7937) (Anabaena variabilis).